We begin with the raw amino-acid sequence, 308 residues long: MANTVILVDQPTLEKMKQTYLPFSNPKLPPGAVFAAKKTGVSITGYKSRKVMFQGVNGEVEAKKWVATLPESKTKAPSVSKGILPANFASKNVIGSDEVGTGDFFGPITVCAAYVDAEMMPLLKELGVKDSKAMKDPEICRIAEKIMPLVPHSVLLCPNPKYNELQKRGMNQGQMKALLHNRAIENVLKKLAPVKPEAILIDQFAEKNTYYRYLAKEPSIIREDVFFATKAEGLHLSVAAASIIARYKFVQAFDAMSKEVGIPLPKGAGPHVDAVAAEIIERFGLETLAKYTKQHFANTEKALKMVKK.

One can recognise an RNase H type-2 domain in the interval 91-308 (KNVIGSDEVG…TEKALKMVKK (218 aa)). Positions 97, 98, and 202 each coordinate a divalent metal cation.

This sequence belongs to the RNase HII family. RnhC subfamily. The cofactor is Mn(2+). Mg(2+) serves as cofactor.

Its subcellular location is the cytoplasm. It catalyses the reaction Endonucleolytic cleavage to 5'-phosphomonoester.. Endonuclease that specifically degrades the RNA of RNA-DNA hybrids. This is Ribonuclease HIII from Listeria monocytogenes serotype 4b (strain CLIP80459).